The sequence spans 61 residues: Small ribosomal subunit protein uS14 (61 aa).

Zn(2+) is bound by residues Cys-24, Cys-27, Cys-40, and Cys-43.

Belongs to the universal ribosomal protein uS14 family. Zinc-binding uS14 subfamily. In terms of assembly, part of the 30S ribosomal subunit. Contacts proteins S3 and S10. Zn(2+) is required as a cofactor.

Functionally, binds 16S rRNA, required for the assembly of 30S particles and may also be responsible for determining the conformation of the 16S rRNA at the A site. This is Small ribosomal subunit protein uS14 from Thermotoga maritima (strain ATCC 43589 / DSM 3109 / JCM 10099 / NBRC 100826 / MSB8).